We begin with the raw amino-acid sequence, 173 residues long: NAD(P)H-quinone oxidoreductase subunit J (173 aa).

It belongs to the complex I 30 kDa subunit family. NDH-1 can be composed of about 15 different subunits; different subcomplexes with different compositions have been identified which probably have different functions.

The protein localises to the cellular thylakoid membrane. The enzyme catalyses a plastoquinone + NADH + (n+1) H(+)(in) = a plastoquinol + NAD(+) + n H(+)(out). It catalyses the reaction a plastoquinone + NADPH + (n+1) H(+)(in) = a plastoquinol + NADP(+) + n H(+)(out). NDH-1 shuttles electrons from an unknown electron donor, via FMN and iron-sulfur (Fe-S) centers, to quinones in the respiratory and/or the photosynthetic chain. The immediate electron acceptor for the enzyme in this species is believed to be plastoquinone. Couples the redox reaction to proton translocation, and thus conserves the redox energy in a proton gradient. Cyanobacterial NDH-1 also plays a role in inorganic carbon-concentration. This chain is NAD(P)H-quinone oxidoreductase subunit J, found in Prochlorococcus marinus (strain NATL2A).